Consider the following 357-residue polypeptide: NADH-quinone oxidoreductase subunit H (357 aa).

A run of 8 helical transmembrane segments spans residues 20-40 (WLLVWTLVKIVAVVLPLMGCV), 92-112 (ALFVIAPIMTIMPALAAWAVI), 127-147 (LLFVMAITSLEVYGVIVAGWA), 165-185 (ISYEIAMGFVLVIVLMVSGSL), 203-223 (GLTFLSWNWLPLLPMFVIYII), 259-279 (FFLAEYANMILISMMATLMFL), 294-314 (IPGWIWLGIKTLFVVTLFIWF), and 329-349 (LGWKVFIPLTLVYLLIVAIWM).

The protein belongs to the complex I subunit 1 family. As to quaternary structure, NDH-1 is composed of 14 different subunits. Subunits NuoA, H, J, K, L, M, N constitute the membrane sector of the complex.

It localises to the cell inner membrane. The catalysed reaction is a quinone + NADH + 5 H(+)(in) = a quinol + NAD(+) + 4 H(+)(out). Functionally, NDH-1 shuttles electrons from NADH, via FMN and iron-sulfur (Fe-S) centers, to quinones in the respiratory chain. The immediate electron acceptor for the enzyme in this species is believed to be ubiquinone. Couples the redox reaction to proton translocation (for every two electrons transferred, four hydrogen ions are translocated across the cytoplasmic membrane), and thus conserves the redox energy in a proton gradient. This subunit may bind ubiquinone. This chain is NADH-quinone oxidoreductase subunit H, found in Herminiimonas arsenicoxydans.